We begin with the raw amino-acid sequence, 188 residues long: Phospholipase A2 inhibitor 31 kDa subunit (188 aa).

Disulfide bonds link Cys3–Cys27, Cys6–Cys13, Cys20–Cys48, Cys54–Cys75, Cys76–Cys81, Cys99–Cys124, Cys117–Cys146, and Cys150–Cys172. A glycan (N-linked (GlcNAc...) asparagine) is linked at Asn157.

It belongs to the CNF-like-inhibitor family. In terms of assembly, heterodimer with phospholipase A2 inhibitor 25 kDa. In terms of processing, N-glycosylated. Expressed by the liver.

The protein localises to the secreted. Its function is as follows. Inhibits the enzymatic activity of phospholipase A2. The chain is Phospholipase A2 inhibitor 31 kDa subunit from Naja kaouthia (Monocled cobra).